Here is an 88-residue protein sequence, read N- to C-terminus: Small ribosomal subunit protein uS15 (88 aa).

Belongs to the universal ribosomal protein uS15 family. Part of the 30S ribosomal subunit. Forms a bridge to the 50S subunit in the 70S ribosome, contacting the 23S rRNA.

In terms of biological role, one of the primary rRNA binding proteins, it binds directly to 16S rRNA where it helps nucleate assembly of the platform of the 30S subunit by binding and bridging several RNA helices of the 16S rRNA. Forms an intersubunit bridge (bridge B4) with the 23S rRNA of the 50S subunit in the ribosome. The chain is Small ribosomal subunit protein uS15 from Leptospira interrogans serogroup Icterohaemorrhagiae serovar copenhageni (strain Fiocruz L1-130).